We begin with the raw amino-acid sequence, 205 residues long: LexA repressor (205 aa).

The H-T-H motif DNA-binding region spans 28–48 (RAEIAHKLGFRSANSAEEHLK). Active-site for autocatalytic cleavage activity residues include serine 122 and lysine 159.

This sequence belongs to the peptidase S24 family. In terms of assembly, homodimer.

The catalysed reaction is Hydrolysis of Ala-|-Gly bond in repressor LexA.. Functionally, represses a number of genes involved in the response to DNA damage (SOS response), including recA and lexA. In the presence of single-stranded DNA, RecA interacts with LexA causing an autocatalytic cleavage which disrupts the DNA-binding part of LexA, leading to derepression of the SOS regulon and eventually DNA repair. The protein is LexA repressor of Idiomarina loihiensis (strain ATCC BAA-735 / DSM 15497 / L2-TR).